Consider the following 391-residue polypeptide: 3-ketoacyl-CoA thiolase (391 aa).

The Acyl-thioester intermediate role is filled by cysteine 95. Active-site proton acceptor residues include histidine 347 and cysteine 377.

Belongs to the thiolase-like superfamily. Thiolase family. In terms of assembly, heterotetramer of two alpha chains (FadB) and two beta chains (FadA).

It is found in the cytoplasm. The enzyme catalyses an acyl-CoA + acetyl-CoA = a 3-oxoacyl-CoA + CoA. The protein operates within lipid metabolism; fatty acid beta-oxidation. In terms of biological role, catalyzes the final step of fatty acid oxidation in which acetyl-CoA is released and the CoA ester of a fatty acid two carbons shorter is formed. In Pseudomonas aeruginosa (strain UCBPP-PA14), this protein is 3-ketoacyl-CoA thiolase.